A 557-amino-acid polypeptide reads, in one-letter code: Formate--tetrahydrofolate ligase (557 aa).

Position 65–72 (65–72 (TPAGEGKT)) interacts with ATP.

The protein belongs to the formate--tetrahydrofolate ligase family.

The enzyme catalyses (6S)-5,6,7,8-tetrahydrofolate + formate + ATP = (6R)-10-formyltetrahydrofolate + ADP + phosphate. It participates in one-carbon metabolism; tetrahydrofolate interconversion. This chain is Formate--tetrahydrofolate ligase, found in Methylococcus capsulatus (strain ATCC 33009 / NCIMB 11132 / Bath).